The sequence spans 258 residues: 14-3-3-like protein 16R (258 aa).

Residues 238 to 258 (DMQDDGTDEIKEAAPKPDNNE) are disordered. Residues 245 to 258 (DEIKEAAPKPDNNE) are compositionally biased toward basic and acidic residues.

This sequence belongs to the 14-3-3 family.

The sequence is that of 14-3-3-like protein 16R from Solanum tuberosum (Potato).